We begin with the raw amino-acid sequence, 82 residues long: Penaeidin-3e (82 aa).

Residues 1–19 form the signal peptide; that stretch reads MRLVVCLVFLAPFALVCHG. Gln20 carries the pyrrolidone carboxylic acid modification. Disulfide bonds link Cys51–Cys66, Cys55–Cys73, and Cys67–Cys74. Ser81 carries the serine amide modification.

Belongs to the penaeidin family.

The protein resides in the cytoplasmic granule. Its function is as follows. Antibacterial and antifungal activity. Presents chitin-binding activity. The sequence is that of Penaeidin-3e from Penaeus vannamei (Whiteleg shrimp).